A 187-amino-acid chain; its full sequence is Elongation factor P (187 aa).

It belongs to the elongation factor P family.

The protein resides in the cytoplasm. It functions in the pathway protein biosynthesis; polypeptide chain elongation. Involved in peptide bond synthesis. Stimulates efficient translation and peptide-bond synthesis on native or reconstituted 70S ribosomes in vitro. Probably functions indirectly by altering the affinity of the ribosome for aminoacyl-tRNA, thus increasing their reactivity as acceptors for peptidyl transferase. This is Elongation factor P (efp) from Treponema pallidum (strain Nichols).